Here is a 165-residue protein sequence, read N- to C-terminus: MAKGGNKKATAAARAAANRLLADNRLARHQYEILDTLETGIELVGTEVKSIRAGQANLRDGFCLIRKGELQLHNVHISPHSHAGSYFNHDPLRTRKLLAHRREIDKLRGQLDRKGLTLIPLNLHLKGSWIKLTIGLGKGRKLHDKRQEEKRKQADREVKSALARY.

The disordered stretch occupies residues 141-165 (KLHDKRQEEKRKQADREVKSALARY). A compositionally biased stretch (basic and acidic residues) spans 145–159 (KRQEEKRKQADREVK).

Belongs to the SmpB family.

The protein resides in the cytoplasm. Its function is as follows. Required for rescue of stalled ribosomes mediated by trans-translation. Binds to transfer-messenger RNA (tmRNA), required for stable association of tmRNA with ribosomes. tmRNA and SmpB together mimic tRNA shape, replacing the anticodon stem-loop with SmpB. tmRNA is encoded by the ssrA gene; the 2 termini fold to resemble tRNA(Ala) and it encodes a 'tag peptide', a short internal open reading frame. During trans-translation Ala-aminoacylated tmRNA acts like a tRNA, entering the A-site of stalled ribosomes, displacing the stalled mRNA. The ribosome then switches to translate the ORF on the tmRNA; the nascent peptide is terminated with the 'tag peptide' encoded by the tmRNA and targeted for degradation. The ribosome is freed to recommence translation, which seems to be the essential function of trans-translation. This is SsrA-binding protein from Prochlorococcus marinus (strain MIT 9303).